Reading from the N-terminus, the 600-residue chain is Chaperone protein DnaK (600 aa).

At threonine 175 the chain carries Phosphothreonine; by autocatalysis. A compositionally biased stretch (low complexity) spans 569–578 (SFAQATAQQA). The tract at residues 569 to 600 (SFAQATAQQANTSESDPKADDSNTIDAEIKQD) is disordered. The segment covering 583-600 (SDPKADDSNTIDAEIKQD) has biased composition (basic and acidic residues).

This sequence belongs to the heat shock protein 70 family.

Functionally, acts as a chaperone. The protein is Chaperone protein DnaK of Mesomycoplasma hyopneumoniae (strain 7448) (Mycoplasma hyopneumoniae).